We begin with the raw amino-acid sequence, 107 residues long: Putative regulatory protein BCG9842_A0044 (107 aa).

It belongs to the RemA family.

In Bacillus cereus (strain G9842), this protein is Putative regulatory protein BCG9842_A0044.